We begin with the raw amino-acid sequence, 358 residues long: Dihydroorotate dehydrogenase (quinone) (358 aa).

Residues 61–65 (AGFDK) and Gly-85 contribute to the FMN site. Lys-65 contacts substrate. 110–114 (NRFGL) serves as a coordination point for substrate. FMN contacts are provided by Asn-139 and Asn-170. Asn-170 is a binding site for substrate. The active-site Nucleophile is Ser-173. Asn-175 contacts substrate. Lys-211 and Ser-239 together coordinate FMN. 240–241 (NT) lines the substrate pocket. FMN contacts are provided by residues Gly-263, Gly-292, and 313 to 314 (YS).

This sequence belongs to the dihydroorotate dehydrogenase family. Type 2 subfamily. In terms of assembly, monomer. FMN is required as a cofactor.

It localises to the cell membrane. The catalysed reaction is (S)-dihydroorotate + a quinone = orotate + a quinol. Its pathway is pyrimidine metabolism; UMP biosynthesis via de novo pathway; orotate from (S)-dihydroorotate (quinone route): step 1/1. Functionally, catalyzes the conversion of dihydroorotate to orotate with quinone as electron acceptor. This chain is Dihydroorotate dehydrogenase (quinone), found in Methylorubrum extorquens (strain CM4 / NCIMB 13688) (Methylobacterium extorquens).